We begin with the raw amino-acid sequence, 228 residues long: RNA chaperone ProQ (228 aa).

The segment at 105-178 (EAKARVQAQR…REEQHTPVSD (74 aa)) is disordered. Basic and acidic residues-rich tracts occupy residues 117-136 (QQAK…DAPR) and 146-173 (RRKE…EEQH).

It belongs to the ProQ family.

The protein resides in the cytoplasm. RNA chaperone with significant RNA binding, RNA strand exchange and RNA duplexing activities. May regulate ProP activity through an RNA-based, post-transcriptional mechanism. The chain is RNA chaperone ProQ from Citrobacter koseri (strain ATCC BAA-895 / CDC 4225-83 / SGSC4696).